The primary structure comprises 390 residues: Lipoyl synthase, mitochondrial (390 aa).

The N-terminal 19 residues, 1–19 (MPTLLRILRPPRSPFTRCL), are a transit peptide targeting the mitochondrion. Positions 23-48 (ATPSSSGSSSRSKFTESLETGPGLDD) are disordered. Residues Cys-98, Cys-103, Cys-109, Cys-136, Cys-140, Cys-143, and Ser-350 each contribute to the [4Fe-4S] cluster site. The region spanning 119 to 339 (AEGRSAATAT…KEVAENLGFL (221 aa)) is the Radical SAM core domain.

This sequence belongs to the radical SAM superfamily. Lipoyl synthase family. [4Fe-4S] cluster serves as cofactor.

Its subcellular location is the mitochondrion. The catalysed reaction is [[Fe-S] cluster scaffold protein carrying a second [4Fe-4S](2+) cluster] + N(6)-octanoyl-L-lysyl-[protein] + 2 oxidized [2Fe-2S]-[ferredoxin] + 2 S-adenosyl-L-methionine + 4 H(+) = [[Fe-S] cluster scaffold protein] + N(6)-[(R)-dihydrolipoyl]-L-lysyl-[protein] + 4 Fe(3+) + 2 hydrogen sulfide + 2 5'-deoxyadenosine + 2 L-methionine + 2 reduced [2Fe-2S]-[ferredoxin]. The protein operates within protein modification; protein lipoylation via endogenous pathway; protein N(6)-(lipoyl)lysine from octanoyl-[acyl-carrier-protein]: step 2/2. Its function is as follows. Catalyzes the radical-mediated insertion of two sulfur atoms into the C-6 and C-8 positions of the octanoyl moiety bound to the lipoyl domains of lipoate-dependent enzymes, thereby converting the octanoylated domains into lipoylated derivatives. This is Lipoyl synthase, mitochondrial from Laccaria bicolor (strain S238N-H82 / ATCC MYA-4686) (Bicoloured deceiver).